The primary structure comprises 228 residues: Ribonuclease 3 (228 aa).

The RNase III domain maps to L7 to G136. E49 is a Mg(2+) binding site. Residue D53 is part of the active site. 2 residues coordinate Mg(2+): D122 and E125. E125 is a catalytic residue. The region spanning D162–E228 is the DRBM domain. The disordered stretch occupies residues G207–E228. Over residues E216–E228 the composition is skewed to low complexity.

The protein belongs to the ribonuclease III family. Homodimer. The cofactor is Mg(2+).

Its subcellular location is the cytoplasm. The catalysed reaction is Endonucleolytic cleavage to 5'-phosphomonoester.. Functionally, digests double-stranded RNA. Involved in the processing of primary rRNA transcript to yield the immediate precursors to the large and small rRNAs (23S and 16S). Processes some mRNAs, and tRNAs when they are encoded in the rRNA operon. Processes pre-crRNA and tracrRNA of type II CRISPR loci if present in the organism. The polypeptide is Ribonuclease 3 (Lactobacillus acidophilus (strain ATCC 700396 / NCK56 / N2 / NCFM)).